The chain runs to 241 residues: B-cell receptor-associated protein 29 (241 aa).

At 1 to 6 the chain is on the lumenal side; sequence MTLQWA. Residues 7–27 form a helical membrane-spanning segment; the sequence is AVATFLYAEIGLILIFCLPFI. The Cytoplasmic segment spans residues 28 to 43; that stretch reads PPQRWQKIFSFNVWGK. Residues 44-64 form a helical membrane-spanning segment; that stretch reads IATFWNKAFLTIIILLIVLFL. The Lumenal segment spans residues 65–103; that stretch reads DAVREVRKYSSVHTIEKSSTSRPDAYEHTQMKLFRSQRN. A helical membrane pass occupies residues 104–124; that stretch reads LYISGFSLFFWLVLRRLVTLI. The Cytoplasmic portion of the chain corresponds to 125–241; the sequence is TQLAKELSNK…RLERGNKKRL (117 aa). The stretch at 166-233 forms a coiled coil; the sequence is GKDEECVLEA…KEHSELQDRL (68 aa). Residues 198–223 are disordered; that stretch reads LSKAQNDVMEMKMQSERLSKEYDQLL. Residues 206–223 show a composition bias toward basic and acidic residues; that stretch reads MEMKMQSERLSKEYDQLL. The Di-lysine motif motif lies at 238 to 241; it reads KKRL.

It belongs to the BCAP29/BCAP31 family. Homodimer. Heterodimer with BCAP31. Binds CASP8 (isoform 9) as a complex containing BCAP31, BCAP29, BCL2 and/or BCL2L1. Interacts with VAMP3, VAMP1 and membrane IgD immunoglobulins. May interact with ACTG1 and non-muscle myosin II.

It is found in the endoplasmic reticulum membrane. Functionally, may play a role in anterograde transport of membrane proteins from the endoplasmic reticulum to the Golgi. May be involved in CASP8-mediated apoptosis. The polypeptide is B-cell receptor-associated protein 29 (BCAP29) (Homo sapiens (Human)).